We begin with the raw amino-acid sequence, 505 residues long: RNA-binding region-containing protein 3 (505 aa).

The 76-residue stretch at 15 to 90 (KTLIIRHLPR…RTLVVEFAKD (76 aa)) folds into the RRM 1 domain. 4 disordered regions span residues 96–123 (ILKDPPVSDRTAAAVAEKEKKEKQQPSV), 193–236 (PPMF…EEER), 354–374 (AQVPRQEEEQEEDEDIPSEFI), and 486–505 (ARSAKPKQESADPKKGGRKH). The segment covering 193 to 214 (PPMFEMPSGPLPPPFPPENPPL) has biased composition (pro residues). Acidic residues-rich tracts occupy residues 221 to 235 (GSEEESEYESEDEEE) and 361 to 370 (EEQEEDEDIP). Residues 405–488 (CRLYVKNVAK…KPLVVQFARS (84 aa)) form the RRM 2 domain. Over residues 491–505 (PKQESADPKKGGRKH) the composition is skewed to basic and acidic residues.

As to quaternary structure, component of the U11/U12 snRNPs that are part of the U12-type spliceosome.

It is found in the nucleus. Functionally, participates in pre-mRNA U12-dependent splicing, performed by the minor spliceosome which removes U12-type introns. U12-type introns comprise less than 1% of all non-coding sequences. The polypeptide is RNA-binding region-containing protein 3 (Danio rerio (Zebrafish)).